The chain runs to 147 residues: Hemoglobin subunit beta-2 (147 aa).

Residues 3–147 (EWTDEERTII…VVSALGRQYH (145 aa)) enclose the Globin domain. Heme b-binding residues include His64 and His93.

Belongs to the globin family. As to quaternary structure, hb 2 is a heterotetramer of two alpha-2 and two beta-2 chains. Hb 3 is a heterotetramer of two alpha-1 and two beta-2 chains. In terms of tissue distribution, red blood cells.

Involved in oxygen transport from gills to the various peripheral tissues. This Gadus morhua (Atlantic cod) protein is Hemoglobin subunit beta-2 (hbb2).